Consider the following 874-residue polypeptide: Adhesion G-protein coupled receptor D1 (874 aa).

Residues 1–25 (MEKLLRLCCWYSWLLLFYYNFQVRG) form the signal peptide. The Extracellular segment spans residues 26-567 (VYSRSQDHPG…LARGHQVALS (542 aa)). Residues 79–276 (KGVTLLYYGR…ASPVMPTDAY (198 aa)) enclose the Pentraxin (PTX) domain. 9 N-linked (GlcNAc...) asparagine glycosylation sites follow: Asn-90, Asn-185, Asn-282, Asn-302, Asn-319, Asn-394, Asn-476, Asn-501, and Asn-533. The GAIN-B domain occupies 371–557 (QVTVEGSSAM…AILMQVVPLE (187 aa)). 2 disulfide bridges follow: Cys-510–Cys-539 and Cys-527–Cys-541. The GPS stretch occupies residues 510 to 557 (CAFLDFSSGEGVWSNHGCALTRGNLTYSVCRCTHLTNFAILMQVVPLE). The stachel stretch occupies residues 546–554 (NFAILMQVV). 17beta-hydroxy-5alpha-androstan-3-one is bound at residue Gln-563. Residues 568-590 (SISYVGCSLSVLCLVATLVTFAV) traverse the membrane as a helical segment. Residues 591–601 (LSSVSTIRNQR) are Cytoplasmic-facing. The chain crosses the membrane as a helical span at residues 602-623 (YHIHANLSFAVLVAQVLLLISF). The Extracellular portion of the chain corresponds to 624–632 (RLEPGTTPC). Cys-632 and Cys-704 form a disulfide bridge. The helical transmembrane segment at 633–655 (QVMAVLLHYFFLSAFAWMLVEGL) threads the bilayer. At 656-673 (HLYSMVIKVFGSEDSKHR) the chain is on the cytoplasmic side. Residues 674–695 (YYYGMGWGFPLLICIISLSFAM) form a helical membrane-spanning segment. Residues 696–710 (DSYGTSNNCWLSLAS) are Extracellular-facing. Residues 711–732 (GAIWAFVAPALFVIVVNIGILI) form a helical membrane-spanning segment. Over 733 to 757 (AVTRVISQISADNYKIHGDPSAFKL) the chain is Cytoplasmic. Residues 758 to 780 (TAKAVAVLLPILGTSWVFGVLAV) traverse the membrane as a helical segment. Residues 781-783 (NGC) lie on the Extracellular side of the membrane. Residues 784–810 (AVVFQYMFATLNSLQGLFIFLFHCLLN) form a helical membrane-spanning segment. Asn-795 contacts 17beta-hydroxy-5alpha-androstan-3-one. Topologically, residues 811-874 (SEVRAAFKHK…SAHRVDLSAV (64 aa)) are cytoplasmic. Residues 854–874 (TKLSPWDKSSHSAHRVDLSAV) form a disordered region. Over residues 861–874 (KSSHSAHRVDLSAV) the composition is skewed to basic and acidic residues.

The protein belongs to the G-protein coupled receptor 2 family. Adhesion G-protein coupled receptor (ADGR) subfamily. Heterodimer of 2 chains generated by proteolytic processing; the large extracellular N-terminal fragment and the membrane-bound C-terminal fragment predominantly remain associated and non-covalently linked. Interacts with ESYT1; interaction takes place in absence of cytosolic calcium and inhibits the G protein-coupled receptor activity of ADGRD1. Autoproteolytically processed at the GPS region of the GAIN-B domain; this cleavage modulates receptor activity. Cleavage takes place early in the secretory pathway before N-glycosylation. As to expression, up-regulated in CD133(+) cell population of glioblastoma.

The protein localises to the cell membrane. With respect to regulation, forms a heterodimer of 2 chains generated by proteolytic processing that remain associated through non-covalent interactions mediated by the GAIN-B domain. In the inactivated receptor, the Stachel sequence (also named stalk) is embedded in the GAIN-B domain, where it adopts a beta-strand conformation. On activation, the Stachel moves into the 7 transmembrane region and adopts a twisted hook-shaped configuration that forms contacts within the receptor, leading to coupling of a G-alpha protein, which activates signaling. The cleaved GAIN-B and N-terminal domains can then dissociate from the rest of the receptor. Interaction with ESYT1 in absence of cytosolic calcium inhibits the G protein-coupled receptor activity; interaction and inhibition is relieved when cytosolic calcium increases. Activated by AP503, a small molecule that activates ADGRD1 without activating androgen nuclear receptors: AP503 enhances muscle strength without eliciting androgenic adverse effects. Activated by the 8E3E8 antibody that targets the N-terminus. Adhesion G-protein coupled receptor (aGPCR) for androgen hormone 5alpha-dihydrotestosterone (5alpha-DHT), also named 17beta-hydroxy-5alpha-androstan-3-one, the most potent hormone among androgens. Also activated by methenolone drug. Ligand binding causes a conformation change that triggers signaling via guanine nucleotide-binding proteins (G proteins) and modulates the activity of downstream effectors, such as adenylate cyclase. ADGRD1 is coupled to G(s) G proteins and mediates activation of adenylate cyclase activity. Acts as a 5alpha-DHT receptor in muscle cells, thereby increasing intracellular cyclic AMP (cAMP) levels and enhancing muscle strength. The protein is Adhesion G-protein coupled receptor D1 of Homo sapiens (Human).